The following is a 171-amino-acid chain: Nicotinamide-nucleotide adenylyltransferase (171 aa).

The protein belongs to the archaeal NMN adenylyltransferase family.

It localises to the cytoplasm. It catalyses the reaction beta-nicotinamide D-ribonucleotide + ATP + H(+) = diphosphate + NAD(+). Its pathway is cofactor biosynthesis; NAD(+) biosynthesis; NAD(+) from nicotinamide D-ribonucleotide: step 1/1. The sequence is that of Nicotinamide-nucleotide adenylyltransferase from Ignicoccus hospitalis (strain KIN4/I / DSM 18386 / JCM 14125).